We begin with the raw amino-acid sequence, 136 residues long: Protein NrdI (136 aa).

The protein belongs to the NrdI family.

Its function is as follows. Probably involved in ribonucleotide reductase function. The chain is Protein NrdI from Escherichia coli O7:K1 (strain IAI39 / ExPEC).